Reading from the N-terminus, the 243-residue chain is Small ribosomal subunit protein uS2 (243 aa).

This sequence belongs to the universal ribosomal protein uS2 family.

The chain is Small ribosomal subunit protein uS2 from Pseudoalteromonas atlantica (strain T6c / ATCC BAA-1087).